Consider the following 102-residue polypeptide: Small ribosomal subunit protein uS10 (102 aa).

This sequence belongs to the universal ribosomal protein uS10 family. As to quaternary structure, part of the 30S ribosomal subunit.

Functionally, involved in the binding of tRNA to the ribosomes. The sequence is that of Small ribosomal subunit protein uS10 from Methanosphaera stadtmanae (strain ATCC 43021 / DSM 3091 / JCM 11832 / MCB-3).